A 359-amino-acid chain; its full sequence is Phospho-N-acetylmuramoyl-pentapeptide-transferase (359 aa).

Transmembrane regions (helical) follow at residues 3-23, 55-75, 80-100, 117-137, 156-176, 187-207, 231-251, 255-275, 280-300, and 334-354; these read QIMI…PALI, VAIL…GLAF, ITAS…VGFL, TAKT…VLQF, IATV…VVSA, LDGL…LITF, LALI…WNAA, IFMG…LSVT, ILAV…VLQI, and FWLL…GEWL.

The protein belongs to the glycosyltransferase 4 family. MraY subfamily. The cofactor is Mg(2+).

It localises to the cell inner membrane. It catalyses the reaction UDP-N-acetyl-alpha-D-muramoyl-L-alanyl-gamma-D-glutamyl-meso-2,6-diaminopimeloyl-D-alanyl-D-alanine + di-trans,octa-cis-undecaprenyl phosphate = di-trans,octa-cis-undecaprenyl diphospho-N-acetyl-alpha-D-muramoyl-L-alanyl-D-glutamyl-meso-2,6-diaminopimeloyl-D-alanyl-D-alanine + UMP. The protein operates within cell wall biogenesis; peptidoglycan biosynthesis. In terms of biological role, catalyzes the initial step of the lipid cycle reactions in the biosynthesis of the cell wall peptidoglycan: transfers peptidoglycan precursor phospho-MurNAc-pentapeptide from UDP-MurNAc-pentapeptide onto the lipid carrier undecaprenyl phosphate, yielding undecaprenyl-pyrophosphoryl-MurNAc-pentapeptide, known as lipid I. The chain is Phospho-N-acetylmuramoyl-pentapeptide-transferase from Mycobacterium marinum (strain ATCC BAA-535 / M).